Here is a 513-residue protein sequence, read N- to C-terminus: ATP synthase subunit alpha (513 aa).

Position 169-176 (169-176) interacts with ATP; that stretch reads GDRQTGKT.

The protein belongs to the ATPase alpha/beta chains family. F-type ATPases have 2 components, CF(1) - the catalytic core - and CF(0) - the membrane proton channel. CF(1) has five subunits: alpha(3), beta(3), gamma(1), delta(1), epsilon(1). CF(0) has three main subunits: a(1), b(2) and c(9-12). The alpha and beta chains form an alternating ring which encloses part of the gamma chain. CF(1) is attached to CF(0) by a central stalk formed by the gamma and epsilon chains, while a peripheral stalk is formed by the delta and b chains.

It localises to the cell inner membrane. It carries out the reaction ATP + H2O + 4 H(+)(in) = ADP + phosphate + 5 H(+)(out). Functionally, produces ATP from ADP in the presence of a proton gradient across the membrane. The alpha chain is a regulatory subunit. In Citrobacter koseri (strain ATCC BAA-895 / CDC 4225-83 / SGSC4696), this protein is ATP synthase subunit alpha.